A 2009-amino-acid chain; its full sequence is Sodium channel protein type 1 subunit alpha (2009 aa).

Residues 1–128 (MEQTVLVPPG…KIAIKILVHS (128 aa)) lie on the Cytoplasmic side of the membrane. Residues 28-48 (RIAEEKAKNPKPDKKDDDENG) are compositionally biased toward basic and acidic residues. Positions 28–60 (RIAEEKAKNPKPDKKDDDENGPKPNSDLEAGKN) are disordered. One copy of the I repeat lies at 110–454 (ILTPFNPLRK…QQMLEQLKKQ (345 aa)). Residues 129–146 (LFSMLIMCTILTNCVFMT) traverse the membrane as a helical segment. The Extracellular portion of the chain corresponds to 147–152 (MSNPPD). Residues 153–177 (WTKNVEYTFTGIYTFESLIKIIARG) form a helical membrane-spanning segment. Residues 178–188 (FCLEDFTFLRD) lie on the Cytoplasmic side of the membrane. A helical transmembrane segment spans residues 189–205 (PWNWLDFTVITFAYVTE). The Extracellular portion of the chain corresponds to 206 to 213 (FVDLGNVS). Residue Asn211 is glycosylated (N-linked (GlcNAc...) asparagine). Residues 214–235 (ALRTFRVLRALKTISVIPGLKT) form a helical membrane-spanning segment. Residues 236–245 (IVGALIQSVK) lie on the Cytoplasmic side of the membrane. A helical membrane pass occupies residues 246–269 (KLSDVMILTVFCLSVFALIGLQLF). Topologically, residues 270 to 369 (MGNLRNKCVQ…YGYTSFDTFS (100 aa)) are extracellular. 2 disulfide bridges follow: Cys277–Cys345 and Cys336–Cys351. 5 N-linked (GlcNAc...) asparagine glycosylation sites follow: Asn284, Asn295, Asn301, Asn306, and Asn338. The pore-forming intramembrane region spans 370 to 384 (WAFLSLFRLMTQDFW). Residues 385 to 397 (ENLYQLTLRAAGK) lie on the Extracellular side of the membrane. A helical transmembrane segment spans residues 398 to 423 (TYMIFFVLVIFLGSFYLINLILAVVA). Over 424–768 (MAYEEQNQAT…HIVNLVVMDP (345 aa)) the chain is Cytoplasmic. The interval 458–528 (AQQAAAATAS…EFHKSESEDS (71 aa)) is disordered. Ser470 carries the phosphoserine modification. Low complexity predominate over residues 479–492 (LSDSSSEASKLSSK). Residues 495-506 (KERRNRRKKRKQ) show a composition bias toward basic residues. Residues 507–528 (KEQSGGEEKDDDEFHKSESEDS) are compositionally biased toward basic and acidic residues. Phosphoserine occurs at positions 523, 525, 550, 551, 607, and 730. Positions 584–628 (VGSENDFADDEHSTFEDNESRRDSLFVPRRHGERRNSNLSQTSRS) are disordered. Positions 593 to 607 (DEHSTFEDNESRRDS) are enriched in basic and acidic residues. An II repeat occupies 750-1022 (CSPYWLKVKH…QIAVDRMHKG (273 aa)). A helical transmembrane segment spans residues 769 to 787 (FVDLAITICIVLNTLFMAM). Residues 788–797 (EHYPMTEHFN) lie on the Extracellular side of the membrane. A helical transmembrane segment spans residues 798-820 (HVLTVGNLVFTGIFTAEMFLKII). Over 821 to 830 (AMDPYYYFQE) the chain is Cytoplasmic. The chain crosses the membrane as a helical span at residues 831–849 (GWNIFDGFIVTLSLVELGL). Residues 850 to 854 (ANVEG) are Extracellular-facing. The chain crosses the membrane as a helical span at residues 855-874 (LSVLRSFRLLRVFKLAKSWP). Over 875–891 (TLNMLIKIIGNSVGALG) the chain is Cytoplasmic. Residues 892–912 (NLTLVLAIIVFIFAVVGMQLF) traverse the membrane as a helical segment. Topologically, residues 913-938 (GKSYKDCVCKIATDCKLPRWHMNDFF) are extracellular. Cys921 and Cys927 form a disulfide bridge. Residues 939–952 (HSFLIVFRVLCGEW) constitute an intramembrane region (pore-forming). The Extracellular portion of the chain corresponds to 953-965 (IETMWDCMEVAGQ). Cys959 and Cys968 are joined by a disulfide. A helical membrane pass occupies residues 966-992 (AMCLTVFMMVMVIRNLVVLNLFLALLL). The Cytoplasmic portion of the chain corresponds to 993–1218 (SSFSADNLAA…RTCFRIVEHN (226 aa)). Residues 1129–1163 (TEDFSSESDLEESKEKLNESSSSSEGSTVDIGAPA) form a disordered region. An III repeat occupies 1200-1514 (RGKQWWNLRR…KKYYNAMKKL (315 aa)). Residues 1219 to 1237 (WFETFIVFMILLSSGALAF) traverse the membrane as a helical segment. At 1238-1250 (EDIYIDQRKTIKT) the chain is on the extracellular side. A helical transmembrane segment spans residues 1251-1276 (MLEYADKVFTYIFILEMLLKWVAYGY). At 1277 to 1278 (QT) the chain is on the cytoplasmic side. The chain crosses the membrane as a helical span at residues 1279–1304 (YFTNAWCWLDFLIVDVSLVSLTANAL). At 1305–1313 (GYSELGAIK) the chain is on the extracellular side. A helical transmembrane segment spans residues 1314–1332 (SLRTLRALRPLRALSRFEG). Residues 1333-1345 (MRVVVNALLGAIP) lie on the Cytoplasmic side of the membrane. Residues 1346 to 1369 (SIMNVLLVCLIFWLIFSIMGVNLF) traverse the membrane as a helical segment. At 1370–1415 (AGKFYHCVNTTTGDTFEITEVNNHSDCLKLIERNETARWKNVKVNF) the chain is on the extracellular side. The cysteines at positions 1376 and 1396 are disulfide-linked. 3 N-linked (GlcNAc...) asparagine glycosylation sites follow: Asn1378, Asn1392, and Asn1403. The segment at residues 1416–1433 (DNVGFGYLSLLQVATFKG) is an intramembrane region (pore-forming). Residues 1434 to 1457 (WMDIMYAAVDSRNVELQPKYEESL) are Extracellular-facing. A helical membrane pass occupies residues 1458 to 1483 (YMYLYFVIFIIFGSFFTLNLFIGVII). Over 1484–1541 (DNFNQQKKKFGGQDIFMTEEQKKYYNAMKKLGSKKPQKPIPRPGNKFQGMVFDFVTRQ) the chain is Cytoplasmic. Ser1516 is subject to Phosphoserine; by PKC. An IV repeat occupies 1523-1821 (IPRPGNKFQG…WEKFDPDATQ (299 aa)). Residues 1542–1560 (VFDISIMILICLNMVTMMV) form a helical membrane-spanning segment. Residues 1561 to 1571 (ETDDQSDYVTS) lie on the Extracellular side of the membrane. Residues 1561–1571 (ETDDQSDYVTS) are S1-S2 loop of repeat IV. Residues 1572–1593 (ILSRINLVFIVLFTGECVLKLI) form a helical membrane-spanning segment. Residues 1594–1601 (SLRHYYFT) are Cytoplasmic-facing. The helical transmembrane segment at 1602-1623 (IGWNIFDFVVVILSIVGMFLAE) threads the bilayer. The S3b-S4 loop of repeat IV stretch occupies residues 1619–1636 (MFLAELIEKYFVSPTLFR). The Extracellular segment spans residues 1624–1636 (LIEKYFVSPTLFR). Residues 1637-1655 (VIRLARIGRILRLIKGAKG) traverse the membrane as a helical segment. The Cytoplasmic portion of the chain corresponds to 1656–1665 (IRTLLFALMM). The helical transmembrane segment at 1666-1688 (SLPALFNIGLLLFLVMFIYAIFG) threads the bilayer. Topologically, residues 1689-1711 (MSNFAYVKREVGIDDMFNFETFG) are extracellular. Residues 1712 to 1726 (NSMICLFQITTSAGW) constitute an intramembrane region (pore-forming). Topologically, residues 1727–1759 (DGLLAPILNSKPPDCDPNKVNPGSSVKGDCGNP) are extracellular. Cys1741 and Cys1756 form a disulfide bridge. The chain crosses the membrane as a helical span at residues 1760–1788 (SVGIFFFVSYIIISFLVVVNMYIAVILEN). Topologically, residues 1789–2009 (FSVATEESAE…EGKDEKAKGK (221 aa)) are cytoplasmic. One can recognise an IQ domain in the interval 1915–1944 (EEVSAVIIQRAYRRHLLKRTVKQASFTYNK). Positions 1986-2009 (YDRVTKPIVEKHEQEGKDEKAKGK) are disordered. Residues 1988–2009 (RVTKPIVEKHEQEGKDEKAKGK) show a composition bias toward basic and acidic residues.

It belongs to the sodium channel (TC 1.A.1.10) family. Nav1.1/SCN1A subfamily. The Nav1.1 voltage-gated sodium channel consists of an ion-conducting alpha subunit SCN1A which is functional on its own regulated by one or more beta-1 (SCN1B), beta-2 (SCN2B), beta-3 (SCN3B) and beta-4 (SCN4B) subunits. SCN1B and SCN3B are non-covalently associated with SCN1A. SCN2B and SCN4B are disulfide-linked to SCN1A. SCN1B regulates both the expression at the plasma membrane and the voltage dependence of Nav1.1 inactivation. SCN3B and SCN4B reduce Nav1.1 conductance. Probably interacts with TMEM233; modulates the gating properties of NaV1.1. Interacts with FGF13; regulates the steady-state inactivation of Nav.1.1. Phosphorylation at Ser-1516 by PKC in a highly conserved cytoplasmic loop slows inactivation of the sodium channel and reduces peak sodium currents.

The protein localises to the cell membrane. The enzyme catalyses Na(+)(in) = Na(+)(out). Activated by the spider toxins Hm1a and Hm1b (H.maculata, AC P60992 and AC P0DOC5) eliciting acute pain and mechanical allodynia. Inhibited by the conotoxin GVIIJ. Its function is as follows. Pore-forming subunit of Nav1.1, a voltage-gated sodium (Nav) channel that directly mediates the depolarizing phase of action potentials in excitable membranes. Navs, also called VGSCs (voltage-gated sodium channels) or VDSCs (voltage-dependent sodium channels), operate by switching between closed and open conformations depending on the voltage difference across the membrane. In the open conformation they allow Na(+) ions to selectively pass through the pore, along their electrochemical gradient. The influx of Na(+) ions provokes membrane depolarization, initiating the propagation of electrical signals throughout cells and tissues. By regulating the excitability of neurons, ensures that they respond appropriately to synaptic inputs, maintaining the balance between excitation and inhibition in brain neural circuits. Nav1.1 plays a role in controlling the excitability and action potential propagation from somatosensory neurons, thereby contributing to the sensory perception of mechanically-induced pain. In Rattus norvegicus (Rat), this protein is Sodium channel protein type 1 subunit alpha.